We begin with the raw amino-acid sequence, 173 residues long: Large ribosomal subunit protein uL10 (173 aa).

This sequence belongs to the universal ribosomal protein uL10 family. In terms of assembly, part of the ribosomal stalk of the 50S ribosomal subunit. The N-terminus interacts with L11 and the large rRNA to form the base of the stalk. The C-terminus forms an elongated spine to which L12 dimers bind in a sequential fashion forming a multimeric L10(L12)X complex.

Its function is as follows. Forms part of the ribosomal stalk, playing a central role in the interaction of the ribosome with GTP-bound translation factors. In Christiangramia forsetii (strain DSM 17595 / CGMCC 1.15422 / KT0803) (Gramella forsetii), this protein is Large ribosomal subunit protein uL10.